A 100-amino-acid polypeptide reads, in one-letter code: Urease subunit gamma (100 aa).

It belongs to the urease gamma subunit family. As to quaternary structure, heterotrimer of UreA (gamma), UreB (beta) and UreC (alpha) subunits. Three heterotrimers associate to form the active enzyme.

The protein resides in the cytoplasm. It carries out the reaction urea + 2 H2O + H(+) = hydrogencarbonate + 2 NH4(+). It functions in the pathway nitrogen metabolism; urea degradation; CO(2) and NH(3) from urea (urease route): step 1/1. This Blochmanniella floridana protein is Urease subunit gamma.